The sequence spans 669 residues: Galactocerebrosidase (669 aa).

The N-terminal stretch at 1–26 (MTAAAGSAGHAAVPLLLCALLVPGGA) is a signal peptide. Threonine 93, tryptophan 135, and asparagine 181 together coordinate substrate. Glutamate 182 acts as the Proton donor/acceptor in catalysis. Glutamate 258 (nucleophile) is an active-site residue. Cysteine 271 and cysteine 378 are joined by a disulfide. An N-linked (GlcNAc...) asparagine glycan is attached at asparagine 363. Arginine 380 contributes to the substrate binding site. Residues asparagine 387, asparagine 543, and asparagine 586 are each glycosylated (N-linked (GlcNAc...) asparagine).

It belongs to the glycosyl hydrolase 59 family.

The protein resides in the lysosome. The catalysed reaction is a beta-D-galactosyl-(1&lt;-&gt;1')-N-acylsphing-4-enine + H2O = an N-acylsphing-4-enine + D-galactose. It carries out the reaction beta-D-galactosyl-(1&lt;-&gt;1)-sphing-4-enine + H2O = sphing-4-enine + D-galactose. The enzyme catalyses a D-galactosylceramide + H2O = an N-acyl-sphingoid base + D-galactose. In terms of biological role, hydrolyzes the galactose ester bonds of glycolipids such as galactosylceramide and galactosylsphingosine. Enzyme with very low activity responsible for the lysosomal catabolism of galactosylceramide, a major lipid in myelin, kidney and epithelial cells of small intestine and colon. This chain is Galactocerebrosidase, found in Canis lupus familiaris (Dog).